The following is a 363-amino-acid chain: Protein RecA (363 aa).

79–86 (GPESSGKT) serves as a coordination point for ATP.

This sequence belongs to the RecA family.

It localises to the cytoplasm. In terms of biological role, can catalyze the hydrolysis of ATP in the presence of single-stranded DNA, the ATP-dependent uptake of single-stranded DNA by duplex DNA, and the ATP-dependent hybridization of homologous single-stranded DNAs. It interacts with LexA causing its activation and leading to its autocatalytic cleavage. In Borrelia turicatae (strain 91E135), this protein is Protein RecA.